The following is an 873-amino-acid chain: Chitin synthase F (873 aa).

The segment at 1–105 (MEDAHDQSSR…KSGSGLRRYP (105 aa)) is disordered. 3 stretches are compositionally biased toward polar residues: residues 33-46 (SYPSNENEDVSQSL), 58-72 (ISSQWPPGTIQQNPS), and 80-98 (ESEVASQTSWQRRQTTKSG). N-linked (GlcNAc...) asparagine glycosylation is present at asparagine 506. Helical transmembrane passes span 532–554 (LVFLHVQLVYNICQLTMTWFSLA), 588–608 (IVNNIIKALYLAFLMQQFFLA), 621–641 (ILTFLYFAIVQLYILILSFYL), 672–692 (GLVLIALVSTYGTYIIASILY), 702–722 (SWAYFLGMPLTINVLNVYAFC), 802–822 (LVLLWTLCNGLLALLINNDSV), and 841–861 (VILWATSGLSVFRFLGALWFL).

This sequence belongs to the chitin synthase family. Class III subfamily.

It is found in the cell membrane. The enzyme catalyses [(1-&gt;4)-N-acetyl-beta-D-glucosaminyl](n) + UDP-N-acetyl-alpha-D-glucosamine = [(1-&gt;4)-N-acetyl-beta-D-glucosaminyl](n+1) + UDP + H(+). In terms of biological role, polymerizes chitin, a structural polymer of the cell wall and septum, by transferring the sugar moiety of UDP-GlcNAc to the non-reducing end of the growing chitin polymer. Plays an important role in septal growth or maintenance. Mediates colony spore formation. This Aspergillus niger (strain ATCC MYA-4892 / CBS 513.88 / FGSC A1513) protein is Chitin synthase F.